Here is a 390-residue protein sequence, read N- to C-terminus: Transforming growth factor beta-1 proprotein (390 aa).

The N-terminal stretch at 1–29 (MPPSGLRLLPLLLPLPWLLVLTPGRPAAG) is a signal peptide. Positions 30 to 74 (LSTCKTIDMELVKRKRIEAIRGQILSKLRLASPPSQGEVPPGPLP) are straightjacket domain. Residues 75-271 (EAVLALYNST…ATPLERAQHL (197 aa)) form an arm domain region. N-linked (GlcNAc...) asparagine glycans are attached at residues Asn-82, Asn-136, and Asn-176. A bowtie tail region spans residues 226-252 (DSKDNKLHVEINGISPKRRGDLGTIHD). Positions 244-246 (RGD) match the Cell attachment site motif. 4 disulfide bridges follow: Cys-285–Cys-294, Cys-293–Cys-356, Cys-322–Cys-387, and Cys-326–Cys-389.

Belongs to the TGF-beta family. Homodimer; disulfide-linked. Interacts with the serine proteases, HTRA1 and HTRA3: the interaction with either inhibits TGFB1-mediated signaling and the HTRA protease activity is required for this inhibition. May interact with THSD4; this interaction may lead to sequestration by FBN1 microfibril assembly and attenuation of TGFB signaling. Interacts with CD109, DPT and ASPN. Interacts with EFEMP2. Interacts with TSKU; the interaction contributes to regulation of the hair cycle. Interacts with TGFBR3. In terms of assembly, homodimer; disulfide-linked. Interacts with transforming growth factor beta-1 (TGF-beta-1) chain; interaction is non-covalent and maintains TGF-beta-1 in a latent state; each latency-associated peptide (LAP) monomer interacts with TGF-beta-1 in the other monomer. Interacts with LTBP1; leading to regulation of TGF-beta-1 activation. Interacts with LRRC32/GARP; leading to regulation of TGF-beta-1 activation on the surface of activated regulatory T-cells (Tregs). Interacts with LRRC33/NRROS; leading to regulation of TGF-beta-1 activation in macrophages and microglia. Interacts (via cell attachment site) with integrins ITGAV and ITGB6 (ITGAV:ITGB6), leading to release of the active TGF-beta-1. Interacts with NREP; the interaction results in a decrease in TGFB1 autoinduction. Interacts with HSP90AB1; inhibits latent TGFB1 activation. As to quaternary structure, homodimer; disulfide-linked. Interacts with TGF-beta receptors (TGFBR1 and TGFBR2), leading to signal transduction. Post-translationally, transforming growth factor beta-1 proprotein: The precursor proprotein is cleaved in the Golgi apparatus by FURIN to form Transforming growth factor beta-1 (TGF-beta-1) and Latency-associated peptide (LAP) chains, which remain non-covalently linked, rendering TGF-beta-1 inactive. N-glycosylated. Deglycosylation leads to activation of Transforming growth factor beta-1 (TGF-beta-1); mechanisms triggering deglycosylation-driven activation of TGF-beta-1 are however unclear. As to expression, expressed in cardiomyocytes. Weakly expressed in the mammary glands, with a slight increase of expression following onset of involution.

It is found in the secreted. Its subcellular location is the extracellular space. The protein resides in the extracellular matrix. Transforming growth factor beta-1 proprotein: Precursor of the Latency-associated peptide (LAP) and Transforming growth factor beta-1 (TGF-beta-1) chains, which constitute the regulatory and active subunit of TGF-beta-1, respectively. Its function is as follows. Required to maintain the Transforming growth factor beta-1 (TGF-beta-1) chain in a latent state during storage in extracellular matrix. Associates non-covalently with TGF-beta-1 and regulates its activation via interaction with 'milieu molecules', such as LTBP1, LRRC32/GARP and LRRC33/NRROS, that control activation of TGF-beta-1. Interaction with LRRC33/NRROS regulates activation of TGF-beta-1 in macrophages and microglia. Interaction with LRRC32/GARP controls activation of TGF-beta-1 on the surface of activated regulatory T-cells (Tregs). Interaction with integrins (ITGAV:ITGB6 or ITGAV:ITGB8) results in distortion of the Latency-associated peptide chain and subsequent release of the active TGF-beta-1. In terms of biological role, multifunctional protein that regulates the growth and differentiation of various cell types and is involved in various processes, such as normal development, immune function, microglia function and responses to neurodegeneration. Activation into mature form follows different steps: following cleavage of the proprotein in the Golgi apparatus, Latency-associated peptide (LAP) and Transforming growth factor beta-1 (TGF-beta-1) chains remain non-covalently linked rendering TGF-beta-1 inactive during storage in extracellular matrix. At the same time, LAP chain interacts with 'milieu molecules', such as LTBP1, LRRC32/GARP and LRRC33/NRROS that control activation of TGF-beta-1 and maintain it in a latent state during storage in extracellular milieus. TGF-beta-1 is released from LAP by integrins (ITGAV:ITGB6 or ITGAV:ITGB8): integrin-binding to LAP stabilizes an alternative conformation of the LAP bowtie tail and results in distortion of the LAP chain and subsequent release of the active TGF-beta-1. Once activated following release of LAP, TGF-beta-1 acts by binding to TGF-beta receptors (TGFBR1 and TGFBR2), which transduce signal. While expressed by many cells types, TGF-beta-1 only has a very localized range of action within cell environment thanks to fine regulation of its activation by Latency-associated peptide chain (LAP) and 'milieu molecules'. Plays an important role in bone remodeling: acts as a potent stimulator of osteoblastic bone formation, causing chemotaxis, proliferation and differentiation in committed osteoblasts. Can promote either T-helper 17 cells (Th17) or regulatory T-cells (Treg) lineage differentiation in a concentration-dependent manner. At high concentrations, leads to FOXP3-mediated suppression of RORC and down-regulation of IL-17 expression, favoring Treg cell development. At low concentrations in concert with IL-6 and IL-21, leads to expression of the IL-17 and IL-23 receptors, favoring differentiation to Th17 cells. Stimulates sustained production of collagen through the activation of CREB3L1 by regulated intramembrane proteolysis (RIP). Mediates SMAD2/3 activation by inducing its phosphorylation and subsequent translocation to the nucleus. Positively regulates odontoblastic differentiation in dental papilla cells, via promotion of IPO7-mediated translocation of phosphorylated SMAD2 to the nucleus and subsequent transcription of target genes. Can induce epithelial-to-mesenchymal transition (EMT) and cell migration in various cell types. The polypeptide is Transforming growth factor beta-1 proprotein (Mus musculus (Mouse)).